Consider the following 120-residue polypeptide: Large ribosomal subunit protein bL17 (120 aa).

It belongs to the bacterial ribosomal protein bL17 family. In terms of assembly, part of the 50S ribosomal subunit. Contacts protein L32.

This Mesomycoplasma hyopneumoniae (strain J / ATCC 25934 / NCTC 10110) (Mycoplasma hyopneumoniae) protein is Large ribosomal subunit protein bL17.